A 1042-amino-acid chain; its full sequence is Ubiquitin carboxyl-terminal hydrolase 38 (1042 aa).

In terms of domain architecture, USP spans 445 to 949; the sequence is TGLINLGNTC…TAYVLLYKKQ (505 aa). Cysteine 454 serves as the catalytic Nucleophile. Histidine 857 serves as the catalytic Proton acceptor.

It belongs to the peptidase C19 family. Interacts with isoform 1 of FBXW7; this interaction prevents FBXW7-mediated degradation of MYC.

Its subcellular location is the cytoplasm. The protein localises to the nucleus. The enzyme catalyses Thiol-dependent hydrolysis of ester, thioester, amide, peptide and isopeptide bonds formed by the C-terminal Gly of ubiquitin (a 76-residue protein attached to proteins as an intracellular targeting signal).. Functionally, deubiquitinating enzyme that plays a role in various cellular processes, including DNA repair, cell cycle regulation, and immune response. Plays a role in the inhibition of type I interferon signaling by mediating the 'Lys-33' to 'Lys-48' ubiquitination transition of TBK1 leading to its degradation. Cleaves the ubiquitin chain from the histone demethylase LSD1/KDM1A and prevents it from degradation by the 26S proteasome, thus maintaining LSD1 protein level in cells. Plays a role in the DNA damage response by regulating the deacetylase activity of HDAC1. Mechanistically, removes the 'Lys-63'-linked ubiquitin chain promoting the deacetylase activity of HDAC1 in response to DNA damage. Also acts as a specific deubiquitinase of histone deacetylase 3/HDAC3 and cleaves its 'Lys-63'-linked ubiquitin chains to lower its histone deacetylase activity. Regulates MYC levels and cell proliferation via antagonizing ubiquitin E3 ligase FBXW7 thereby preventing MYC 'Lys-48'-linked ubiquitination and degradation. Participates in antiviral response by removing both 'Lys-48'-linked and 'Lys-63'-linked polyubiquitination of Zika virus envelope protein E. Constitutively associated with IL-33R/IL1RL1, deconjugates its 'Lys-27'-linked polyubiquitination resulting in its autophagic degradation. The sequence is that of Ubiquitin carboxyl-terminal hydrolase 38 (Usp38) from Mus musculus (Mouse).